The sequence spans 374 residues: Probable tRNA pseudouridine synthase D (374 aa).

D81 (nucleophile) is an active-site residue. Positions 141 to 340 constitute a TRUD domain; that stretch reads VFPNYFDVQR…RKGFQKMYDL (200 aa).

Belongs to the pseudouridine synthase TruD family.

The enzyme catalyses uridine(13) in tRNA = pseudouridine(13) in tRNA. In terms of biological role, could be responsible for synthesis of pseudouridine from uracil-13 in transfer RNAs. The chain is Probable tRNA pseudouridine synthase D from Nanoarchaeum equitans (strain Kin4-M).